Consider the following 505-residue polypeptide: Histidine ammonia-lyase (505 aa).

Positions A141–G143 form a cross-link, 5-imidazolinone (Ala-Gly). A 2,3-didehydroalanine (Ser) modification is found at S142.

The protein belongs to the PAL/histidase family. Contains an active site 4-methylidene-imidazol-5-one (MIO), which is formed autocatalytically by cyclization and dehydration of residues Ala-Ser-Gly.

The protein resides in the cytoplasm. It catalyses the reaction L-histidine = trans-urocanate + NH4(+). It participates in amino-acid degradation; L-histidine degradation into L-glutamate; N-formimidoyl-L-glutamate from L-histidine: step 1/3. In Bacillus cytotoxicus (strain DSM 22905 / CIP 110041 / 391-98 / NVH 391-98), this protein is Histidine ammonia-lyase.